The primary structure comprises 404 residues: N-acetylglucosamine-6-phosphate deacetylase (404 aa).

Glu-143 contributes to the a divalent metal cation binding site. Residue 154–155 participates in substrate binding; that stretch reads AH. Positions 211 and 232 each coordinate a divalent metal cation. Substrate-binding positions include 235 to 236, Arg-243, and 269 to 272; these read NA and DGIH. Asp-294 (proton donor/acceptor) is an active-site residue. 328-330 serves as a coordination point for substrate; the sequence is LSG.

Belongs to the metallo-dependent hydrolases superfamily. NagA family. The cofactor is a divalent metal cation.

The enzyme catalyses N-acetyl-D-glucosamine 6-phosphate + H2O = D-glucosamine 6-phosphate + acetate. The protein operates within amino-sugar metabolism; N-acetylneuraminate degradation. Its function is as follows. Hydrolyzes the N-glycolyl group from N-glycolylglucosamine 6-phosphate (GlcNGc-6-P) in the N-glycolylneuraminic acid (Neu5Gc) degradation pathway. This chain is N-acetylglucosamine-6-phosphate deacetylase (amdhd2), found in Danio rerio (Zebrafish).